We begin with the raw amino-acid sequence, 44 residues long: uncharacterized protein (44 aa).

The tract at residues 22 to 44 is disordered; the sequence is LNSAPAFKSSQNTSTQAKPTFSN.

This is an uncharacterized protein from Dictyostelium discoideum (Social amoeba).